The sequence spans 500 residues: Cytochrome P450 2D20 (500 aa).

C446 contributes to the heme binding site.

The protein belongs to the cytochrome P450 family. Heme is required as a cofactor.

It localises to the endoplasmic reticulum membrane. The protein localises to the microsome membrane. The sequence is that of Cytochrome P450 2D20 (CYP2D20) from Mesocricetus auratus (Golden hamster).